A 900-amino-acid polypeptide reads, in one-letter code: MESCYNPGLDGIIEYDDFKLNSSIVEPKEPAPETADGPYLVIVEQPKQRGFRFRYGCEGPSHGGLPGASSEKGRKTYPTVKICNYEGPAKIEVDLVTHSDPPRAHAHSLVGKQCSELGICAVSVGPKDMTAQFNNLGVLHVTKKNMMGTMIQKLQRQRLRSRPQGLTEAEQRELEQEAKELKKVMDLSIVRLRFSAFLRASDGSFSLPLKPVISQPIHDSKSPGASNLKISRMDKTAGSVRGGDEVYLLCDKVQKDDIEVRFYEDDENGWQAFGDFSPTDVHKQYAIVFRTPPYHKMKIERPVTVFLQLKRKRGGDVSDSKQFTYYPLVEDKEEVQRKRRKALPTFSQPFGGGSHMGGGSGGAAGGYGGAGGGGSLGFFPSSLAYSPYQSGAGPMGCYPGGGGGAQMAATVPSRDSGEEAAEPSAPSRTPQCEPQAPEMLQRAREYNARLFGLAQRSARALLDYGVTADARALLAGQRHLLTAQDENGDTPLHLAIIHGQTSVIEQIVYVIHHAQDLGVVNLTNHLHQTPLHLAVITGQTSVVSFLLRVGADPALLDRHGDSAMHLALRAGAGAPELLRALLQSGAPAVPQLLHMPDFEGLYPVHLAVRARSPECLDLLVDSGAEVEATERQGGRTALHLATEMEELGLVTHLVTKLRANVNARTFAGNTPLHLAAGLGYPTLTRLLLKAGADIHAENEEPLCPLPSPPTSDSDSDSEGPEKDTRSSFRGHTPLDLTCSTKVKTLLLNAAQNTMEPPLTPPSPAGPGLSLGDTALQNLEQLLDGPEAQGSWAELAERLGLRSLVDTYRQTTSPSGSLLRSYELAGGDLAGLLEALSDMGLEEGVRLLRGPETRDKLPSTAEVKEDSAYGSQSVEQEAEKLGPPPEPPGGLCHGHPQPQVH.

A phosphoserine mark is found at Ser23 and Ser161. The 306-residue stretch at 38 to 343 (PYLVIVEQPK…EVQRKRRKAL (306 aa)) folds into the RHD domain. The short motif at 337–341 (RKRRK) is the Nuclear localization signal element. The GRR stretch occupies residues 346–377 (FSQPFGGGSHMGGGSGGAAGGYGGAGGGGSLG). The tract at residues 404 to 435 (GAQMAATVPSRDSGEEAAEPSAPSRTPQCEPQ) is disordered. Thr429 carries the post-translational modification Phosphothreonine. 6 ANK repeats span residues 487–519 (NGDT…DLGV), 526–555 (LHQT…DPAL), 559–591 (HGDS…AVPQ), 599–628 (EGLY…EVEA), 633–663 (GGRT…NVNA), and 667–696 (AGNT…DIHA). Positions 698–734 (NEEPLCPLPSPPTSDSDSDSEGPEKDTRSSFRGHTPL) are disordered. Phosphoserine occurs at positions 713, 715, and 717. One copy of the ANK 7 repeat lies at 729–758 (RGHTPLDLTCSTKVKTLLLNAAQNTMEPPL). The 88-residue stretch at 764-851 (AGPGLSLGDT…EGVRLLRGPE (88 aa)) folds into the Death domain. Phosphoserine is present on Ser812. Over residues 849-866 (GPETRDKLPSTAEVKEDS) the composition is skewed to basic and acidic residues. The segment at 849-900 (GPETRDKLPSTAEVKEDSAYGSQSVEQEAEKLGPPPEPPGGLCHGHPQPQVH) is disordered. Lys855 participates in a covalent cross-link: Glycyl lysine isopeptide (Lys-Gly) (interchain with G-Cter in ubiquitin). Residues Ser866 and Ser870 each carry the phosphoserine; by MAP3K14 modification. Residues 888-900 (GGLCHGHPQPQVH) show a composition bias toward low complexity.

Component of the NF-kappa-B RelB-p52 complex. Homodimer; component of the NF-kappa-B p52-p52 complex. Component of the NF-kappa-B p65-p52 complex. Component of the NF-kappa-B p52-c-Rel complex. NFKB2/p52 interacts with NFKBIE. Component of a complex consisting of the NF-kappa-B p50-p50 homodimer and BCL3. Directly interacts with MEN1. In terms of processing, while translation occurs, the particular unfolded structure after the GRR repeat promotes the generation of p52 making it an acceptable substrate for the proteasome. This process is known as cotranslational processing. The processed form is active and the unprocessed form acts as an inhibitor (I kappa B-like), being able to form cytosolic complexes with NF-kappa B, trapping it in the cytoplasm. Complete folding of the region downstream of the GRR repeat precludes processing. Post-translationally, subsequent to MAP3K14-dependent serine phosphorylation, p100 polyubiquitination occurs then triggering its proteasome-dependent processing. Constitutive processing is tightly suppressed by its C-terminal processing inhibitory domain, named PID, which contains the death domain. In terms of processing, ubiquitinated by TRIM55; leading to processing by VCP and subsequent ubiquitin-dependent protein degradation by the proteasome.

It localises to the nucleus. The protein localises to the cytoplasm. Its function is as follows. NF-kappa-B is a pleiotropic transcription factor present in almost all cell types and is the endpoint of a series of signal transduction events that are initiated by a vast array of stimuli related to many biological processes such as inflammation, immunity, differentiation, cell growth, tumorigenesis and apoptosis. NF-kappa-B is a homo- or heterodimeric complex formed by the Rel-like domain-containing proteins RELA/p65, RELB, NFKB1/p105, NFKB1/p50, REL and NFKB2/p52. The dimers bind at kappa-B sites in the DNA of their target genes and the individual dimers have distinct preferences for different kappa-B sites that they can bind with distinguishable affinity and specificity. Different dimer combinations act as transcriptional activators or repressors, respectively. NF-kappa-B is controlled by various mechanisms of post-translational modification and subcellular compartmentalization as well as by interactions with other cofactors or corepressors. NF-kappa-B complexes are held in the cytoplasm in an inactive state complexed with members of the NF-kappa-B inhibitor (I-kappa-B) family. In a conventional activation pathway, I-kappa-B is phosphorylated by I-kappa-B kinases (IKKs) in response to different activators, subsequently degraded thus liberating the active NF-kappa-B complex which translocates to the nucleus. In a non-canonical activation pathway, the MAP3K14-activated CHUK/IKKA homodimer phosphorylates NFKB2/p100 associated with RelB, inducing its proteolytic processing to NFKB2/p52 and the formation of NF-kappa-B RelB-p52 complexes. The NF-kappa-B heterodimeric RelB-p52 complex is a transcriptional activator. The NF-kappa-B p52-p52 homodimer is a transcriptional repressor. NFKB2 appears to have dual functions such as cytoplasmic retention of attached NF-kappa-B proteins by p100 and generation of p52 by a cotranslational processing. The proteasome-mediated process ensures the production of both p52 and p100 and preserves their independent function. p52 binds to the kappa-B consensus sequence 5'-GGRNNYYCC-3', located in the enhancer region of genes involved in immune response and acute phase reactions. p52 and p100 are respectively the minor and major form; the processing of p100 being relatively poor. Isoform p49 is a subunit of the NF-kappa-B protein complex, which stimulates the HIV enhancer in synergy with p65. In concert with RELB, regulates the circadian clock by repressing the transcriptional activator activity of the CLOCK-BMAL1 heterodimer. The polypeptide is Nuclear factor NF-kappa-B p100 subunit (NFKB2) (Homo sapiens (Human)).